Reading from the N-terminus, the 277-residue chain is Caspase-3 (277 aa).

Position 1 is an N-acetylmethionine (Met-1). Propeptides lie at residues Met-1 to Asp-9 and Ser-10 to Asp-28. Lys-11 carries the post-translational modification N6-acetyllysine. Ser-26 is modified (phosphoserine). Residues His-121 and Cys-163 contribute to the active site. Position 163 is an S-nitrosocysteine; in inhibited form (Cys-163).

Belongs to the peptidase C14A family. Heterotetramer that consists of two anti-parallel arranged heterodimers, each one formed by a 17 kDa (p17) and a 12 kDa (p12) subunit. Interacts with BIRC6/bruce. As to quaternary structure, (Microbial infection) Subunit p17 interacts with African swine fever virus (ASFV) inhibitor of apoptosis protein. Cleavage by granzyme B, caspase-6, caspase-8 and caspase-10 generates the two active subunits. Additional processing of the propeptides is likely due to the autocatalytic activity of the activated protease. Active heterodimers between the small subunit of caspase-7 protease and the large subunit of caspase-3 also occur and vice versa. Post-translationally, S-nitrosylated on its catalytic site cysteine in unstimulated cell lines and denitrosylated upon activation of the Fas apoptotic pathway, associated with an increase in intracellular caspase activity. Fas therefore activates caspase-3 not only by inducing the cleavage of the caspase zymogen to its active subunits, but also by stimulating the denitrosylation of its active site thiol. In terms of processing, ubiquitinated by BIRC6; this activity is inhibited by DIABLO/SMAC.

It is found in the cytoplasm. The catalysed reaction is Strict requirement for an Asp residue at positions P1 and P4. It has a preferred cleavage sequence of Asp-Xaa-Xaa-Asp-|- with a hydrophobic amino-acid residue at P2 and a hydrophilic amino-acid residue at P3, although Val or Ala are also accepted at this position.. Inhibited by BIRC6; following inhibition of BIRC6-caspase binding by DIABLO/SMAC, BIRC6 is subjected to caspase cleavage, leading to an increase in active caspases. Functionally, involved in the activation cascade of caspases responsible for apoptosis execution. At the onset of apoptosis, it proteolytically cleaves poly(ADP-ribose) polymerase PARP1 at a '216-Asp-|-Gly-217' bond. Cleaves and activates sterol regulatory element binding proteins (SREBPs) between the basic helix-loop-helix leucine zipper domain and the membrane attachment domain. Cleaves and activates caspase-6, -7 and -9 (CASP6, CASP7 and CASP9, respectively). Cleaves and inactivates interleukin-18 (IL18). Triggers cell adhesion in sympathetic neurons through RET cleavage. Cleaves IL-1 beta between an Asp and an Ala, releasing the mature cytokine which is involved in a variety of inflammatory processes. Cleaves and inhibits serine/threonine-protein kinase AKT1 in response to oxidative stress. Acts as an inhibitor of type I interferon production during virus-induced apoptosis by mediating cleavage of antiviral proteins CGAS, IRF3 and MAVS, thereby preventing cytokine overproduction. Also involved in pyroptosis by mediating cleavage and activation of gasdermin-E (GSDME). Cleaves XRCC4 and phospholipid scramblase proteins XKR4, XKR8 and XKR9, leading to promote phosphatidylserine exposure on apoptotic cell surface. Cleaves BIRC6 following inhibition of BIRC6-caspase binding by DIABLO/SMAC. This is Caspase-3 (CASP3) from Sus scrofa (Pig).